Consider the following 132-residue polypeptide: Small ribosomal subunit protein uS8 (132 aa).

This sequence belongs to the universal ribosomal protein uS8 family. As to quaternary structure, part of the 30S ribosomal subunit. Contacts proteins S5 and S12.

Functionally, one of the primary rRNA binding proteins, it binds directly to 16S rRNA central domain where it helps coordinate assembly of the platform of the 30S subunit. This is Small ribosomal subunit protein uS8 from Saccharopolyspora erythraea (strain ATCC 11635 / DSM 40517 / JCM 4748 / NBRC 13426 / NCIMB 8594 / NRRL 2338).